Here is a 467-residue protein sequence, read N- to C-terminus: Septin-10 (467 aa).

The Septin-type G domain occupies 63-329 (QGFCFNILCV…ELYRRCKLEE (267 aa)). The tract at residues 73–80 (GETGIGKS) is G1 motif. GTP-binding positions include 73–80 (GETGIGKS), glycine 128, 209–217 (KADTVSKTE), glycine 263, and arginine 278. The segment at 125–128 (NTVG) is G3 motif. Residues 208 to 211 (AKAD) are G4 motif.

It belongs to the TRAFAC class TrmE-Era-EngA-EngB-Septin-like GTPase superfamily. Septin GTPase family. As to quaternary structure, septins polymerize into heterooligomeric protein complexes that form filaments, and can associate with cellular membranes, actin filaments and microtubules. GTPase activity is required for filament formation. Interacts with ADGB. Post-translationally, proteolytically cleaved in vitro in a calmodulin-dependent manner.

The protein resides in the cytoplasm. It is found in the cytoskeleton. It localises to the cell projection. Its subcellular location is the cilium. The protein localises to the flagellum. In terms of biological role, filament-forming cytoskeletal GTPase. May play a role in cytokinesis (Potential). The protein is Septin-10 of Pongo abelii (Sumatran orangutan).